The chain runs to 435 residues: MYDSVKGFRDFYPKEMQARRWAMDTLEDVAQRYGFREIGTPALEPTEMYVDKSGEEIVEELYSFEDKGGRKVALTPELTPTVARMFVAKQQELSKPIKWVSTRPFWRYEEPQQGRFREFYQTNVDIFGSAEPTADAEILAVAVDMLTDLGLTGEDFEIRVSHRDILSGVLESFEADVDVPEAIRAVDKRAKVDHDEYLDALAEAGLSYGQADTFDEMLQIDAEEIETLGDLTGSEDVRTATDNLQAVLDAAEDFGVREHLTVSLTTARGLDYYTGVVFECFDSTGEVSRSVFGGGRYDDLIEGFGGQPTPAVGFAPGHATLQLLCQRAGVWPAEELSTDYYVLQVGDTRPTAARIARDLRERGHVVESDVADRSFGAQMGYADGINAETVVIVGEQDLENDEVTLKEMDDGEQVSVPLSAFPGDYDRPTFEDFAE.

The segment at 415 to 435 is disordered; the sequence is SVPLSAFPGDYDRPTFEDFAE. Residues 424-435 are compositionally biased toward basic and acidic residues; that stretch reads DYDRPTFEDFAE.

The protein belongs to the class-II aminoacyl-tRNA synthetase family.

It is found in the cytoplasm. The catalysed reaction is tRNA(His) + L-histidine + ATP = L-histidyl-tRNA(His) + AMP + diphosphate + H(+). The protein is Histidine--tRNA ligase of Haloarcula marismortui (strain ATCC 43049 / DSM 3752 / JCM 8966 / VKM B-1809) (Halobacterium marismortui).